The sequence spans 831 residues: MRLKTPMKAIHKNLLLTRTGDVWAYYRIKSNSIPMQNKEKVESYKKKWQHLFEEITSYEDFHLMMYPSEYELEKRFKDLETDIAADAMDVARYYNEETVRLLEQRLGRLTKYDFILGVKLKSSLVNISVELKDNILSFFNTATDTVVKMLGWEQNVSTSFFEKYEEVEETLANIMASVRGERLSETEMTYINRYHFVRGLKHQTNEESEIKDVRSITNTIIDPTDPSVLHLHSDQDEGYSAFVVIDEFLHNMSESDLFYEAQSLPFPVEVQMKIQTESKSITKPALNLKRQQLKEEQKEQQSTGDRSDVSTVTSATMIRHLQDEIKKEDVHVMNWLSVIVVHGKTKKECVGKATIVKRHLKGAGITCRLPVADQLNLFYKMLPGEKLDITDKNWIQKTTQDGVAESLFAVNSDIGSKIGFFLGWVDRFQEHTDLESAIMSSRDFVLFHPFLANQQLKGSKTRSPHCLITGDTGNGKSYLAKLIFNYISMLNIKSLYIDPKKEMRKWIQRVLNDEYIRENFPLYIAHLEKYNYITLDHENTHNWGALDPISFLPPMKAKELVQVIFEQVYDFKGKDDINTAFLRATSEVIDAKQKGEQVGSLDIIRKMQSHPEEAVQKAGDYLNEVVSDSILKLCIHDGSNPALSLEKRITILEVENMDLPDHAERLENYTISQLKSSAVMFALGKFCELFGMNQDEQTVEFIDEAWIFTTSQQGKKVERQMRRIGRSYNNAEYFISQSTKDALKEEDSGNFGVAFAFDEPNEREEVLKWMNMEVTKDNKKMMESMFQGQCLFKDYYGRTSKISIECLFEEWQGALKTVEKKAVAYAEEKYL.

The segment at 285 to 311 (ALNLKRQQLKEEQKEQQSTGDRSDVST) is disordered. 470–477 (GDTGNGKS) serves as a coordination point for ATP.

This is an uncharacterized protein from Bacillus subtilis (strain 168).